The chain runs to 124 residues: Acidic phospholipase A2 BA2 (124 aa).

Disulfide bonds link Cys-26/Cys-116, Cys-28/Cys-44, Cys-43/Cys-95, Cys-49/Cys-124, Cys-50/Cys-88, Cys-57/Cys-81, and Cys-75/Cys-86. 3 residues coordinate Ca(2+): Tyr-27, Gly-29, and Gly-31. His-47 is a catalytic residue. Asp-48 is a binding site for Ca(2+). Residue Asp-89 is part of the active site.

This sequence belongs to the phospholipase A2 family. Group II subfamily. D49 sub-subfamily. It depends on Ca(2+) as a cofactor. Expressed by the venom gland.

The protein localises to the secreted. The enzyme catalyses a 1,2-diacyl-sn-glycero-3-phosphocholine + H2O = a 1-acyl-sn-glycero-3-phosphocholine + a fatty acid + H(+). In terms of biological role, PLA2 catalyzes the calcium-dependent hydrolysis of the 2-acyl groups in 3-sn-phosphoglycerides. The sequence is that of Acidic phospholipase A2 BA2 from Gloydius halys (Chinese water mocassin).